Consider the following 303-residue polypeptide: Probable alpha-L-glutamate ligase 1 (303 aa).

The ATP-grasp domain maps to 104-287; that stretch reads LQLLSRKGVG…IAGLIYSFIE (184 aa). Residues Lys141, 178–179, Asp187, and 211–213 each bind ATP; these read EF and RSN. Residues Asp248, Glu260, and Asn262 each coordinate Mg(2+). 3 residues coordinate Mn(2+): Asp248, Glu260, and Asn262.

This sequence belongs to the RimK family. Mg(2+) is required as a cofactor. It depends on Mn(2+) as a cofactor.

In Hahella chejuensis (strain KCTC 2396), this protein is Probable alpha-L-glutamate ligase 1.